We begin with the raw amino-acid sequence, 130 residues long: Fumarate reductase subunit C (130 aa).

3 helical membrane passes run 33–53 (AVTTMWFSILLIYGLFALKGG), 60–80 (FVTFLQNPVILLVNIITLLGA), and 109–129 (VIKLLWAVTIIVTMIILGIAL).

The protein belongs to the FrdC family. In terms of assembly, part of an enzyme complex containing four subunits: a flavoprotein (FrdA), an iron-sulfur protein (FrdB), and two hydrophobic anchor proteins (FrdC and FrdD).

The protein localises to the cell inner membrane. In terms of biological role, two distinct, membrane-bound, FAD-containing enzymes are responsible for the catalysis of fumarate and succinate interconversion; fumarate reductase is used in anaerobic growth, and succinate dehydrogenase is used in aerobic growth. Anchors the catalytic components of the fumarate reductase complex to the cell inner membrane, binds quinones. In Photorhabdus laumondii subsp. laumondii (strain DSM 15139 / CIP 105565 / TT01) (Photorhabdus luminescens subsp. laumondii), this protein is Fumarate reductase subunit C.